The primary structure comprises 166 residues: Lithostathine-1-alpha (166 aa).

Residues 1 to 22 form the signal peptide; the sequence is MAQTSSYFMLISCLMFLSQSQG. At Gln23 the chain carries Pyrrolidone carboxylic acid. O-linked (GalNAc) threonine glycosylation is present at Thr27. One can recognise a C-type lectin domain in the interval 34 to 164; sequence ISCPEGTNAY…EDKFSFVCKF (131 aa). 3 cysteine pairs are disulfide-bonded: Cys36–Cys47, Cys64–Cys162, and Cys137–Cys154.

Post-translationally, the composition of the O-linked carbohydrate on Thr-27 is complex and varied. In the crystallographic structure, the attached sugar appears to be N-acetylglucosamine, typical of an intracellular protein, rather than N-acetylgalactosamine. In terms of tissue distribution, in pancreatic acinar cells and, in lower levels, in brain. Enhanced expression of PSP-related transcripts and intraneuronal accumulation of PSP-like proteins is found in brain from Alzheimer disease and Down syndrome patients.

It localises to the secreted. Its function is as follows. Might act as an inhibitor of spontaneous calcium carbonate precipitation. May be associated with neuronal sprouting in brain, and with brain and pancreas regeneration. The polypeptide is Lithostathine-1-alpha (REG1A) (Homo sapiens (Human)).